A 314-amino-acid chain; its full sequence is Ornithine carbamoyltransferase (314 aa).

Carbamoyl phosphate is bound by residues 58–61 (STRT), glutamine 85, arginine 109, and 136–139 (HPLQ). Residues asparagine 168, aspartate 232, and 236–237 (SM) each bind L-ornithine. Carbamoyl phosphate-binding positions include 272 to 273 (CL) and arginine 300.

This sequence belongs to the aspartate/ornithine carbamoyltransferase superfamily. OTCase family.

The protein resides in the cytoplasm. It catalyses the reaction carbamoyl phosphate + L-ornithine = L-citrulline + phosphate + H(+). It participates in amino-acid biosynthesis; L-arginine biosynthesis; L-arginine from L-ornithine and carbamoyl phosphate: step 1/3. Reversibly catalyzes the transfer of the carbamoyl group from carbamoyl phosphate (CP) to the N(epsilon) atom of ornithine (ORN) to produce L-citrulline. This is Ornithine carbamoyltransferase from Hyperthermus butylicus (strain DSM 5456 / JCM 9403 / PLM1-5).